Consider the following 354-residue polypeptide: Photosystem II protein D1 1 (354 aa).

3 helical membrane-spanning segments follow: residues 29–46 (YIGWFGVLMIPTLLTATT), 118–133 (HFLIGVFCYMGREWEL), and 142–156 (WIAVAYSAPVAAATA). His-118 contacts chlorophyll a. Tyr-126 contributes to the pheophytin a binding site. Residues Asp-170 and Glu-189 each coordinate [CaMn4O5] cluster. A helical transmembrane segment spans residues 197–218 (FHQLGVAGVFGGALFSAMHGSL). His-198 provides a ligand contact to chlorophyll a. A quinone contacts are provided by residues His-215 and 264 to 265 (SF). His-215 contributes to the Fe cation binding site. His-272 is a Fe cation binding site. A helical membrane pass occupies residues 274 to 288 (FLAAWPVIGIWFTAL). Residues His-332, Glu-333, Asp-342, and Ala-344 each coordinate [CaMn4O5] cluster. The propeptide occupies 345–354 (AVEVAPAIRG).

The protein belongs to the reaction center PufL/M/PsbA/D family. PSII is composed of 1 copy each of membrane proteins PsbA, PsbB, PsbC, PsbD, PsbE, PsbF, PsbH, PsbI, PsbJ, PsbK, PsbL, PsbM, PsbT, PsbX, PsbY, PsbZ, Psb30/Ycf12, peripheral proteins PsbO, CyanoQ (PsbQ), PsbU, PsbV and a large number of cofactors. It forms dimeric complexes. The cofactor is The D1/D2 heterodimer binds P680, chlorophylls that are the primary electron donor of PSII, and subsequent electron acceptors. It shares a non-heme iron and each subunit binds pheophytin, quinone, additional chlorophylls, carotenoids and lipids. D1 provides most of the ligands for the Mn4-Ca-O5 cluster of the oxygen-evolving complex (OEC). There is also a Cl(-1) ion associated with D1 and D2, which is required for oxygen evolution. The PSII complex binds additional chlorophylls, carotenoids and specific lipids.. Post-translationally, tyr-161 forms a radical intermediate that is referred to as redox-active TyrZ, YZ or Y-Z. C-terminally processed by CtpA; processing is essential to allow assembly of the oxygen-evolving complex and thus photosynthetic growth.

It is found in the cellular thylakoid membrane. The catalysed reaction is 2 a plastoquinone + 4 hnu + 2 H2O = 2 a plastoquinol + O2. Functionally, photosystem II (PSII) is a light-driven water:plastoquinone oxidoreductase that uses light energy to abstract electrons from H(2)O, generating O(2) and a proton gradient subsequently used for ATP formation. It consists of a core antenna complex that captures photons, and an electron transfer chain that converts photonic excitation into a charge separation. The D1/D2 (PsbA/PsbD) reaction center heterodimer binds P680, the primary electron donor of PSII as well as several subsequent electron acceptors. This chain is Photosystem II protein D1 1, found in Synechococcus sp. (strain JA-3-3Ab) (Cyanobacteria bacterium Yellowstone A-Prime).